A 340-amino-acid chain; its full sequence is 4-hydroxy-2-oxovalerate aldolase (340 aa).

One can recognise a Pyruvate carboxyltransferase domain in the interval 8–260 (VILHDMSLRD…HHGVNLYDIM (253 aa)). Residue 16 to 17 (RD) coordinates substrate. D17 provides a ligand contact to Mn(2+). Residue H20 is the Proton acceptor of the active site. S170 and H199 together coordinate substrate. Positions 199 and 201 each coordinate Mn(2+). Residue Y290 participates in substrate binding.

This sequence belongs to the 4-hydroxy-2-oxovalerate aldolase family.

It carries out the reaction (S)-4-hydroxy-2-oxopentanoate = acetaldehyde + pyruvate. This Shewanella halifaxensis (strain HAW-EB4) protein is 4-hydroxy-2-oxovalerate aldolase.